Reading from the N-terminus, the 88-residue chain is Cytochrome c oxidase subunit 6B2 (88 aa).

The interval 1 to 21 (MLGVQAQMPAPGQWTTPPFDP) is disordered. In terms of domain architecture, CHCH spans 29–75 (TRNCYQNFLDYHRCVKTMDRRGKNTQACDYYFRVFHSLCPVSWVQRW). Positions 32–42 (CYQNFLDYHRC) match the Cx9C motif motif. Disulfide bonds link cysteine 32–cysteine 67 and cysteine 42–cysteine 56. The Cx10C motif motif lies at 56 to 67 (CDYYFRVFHSLC).

It belongs to the cytochrome c oxidase subunit 6B family. Component of the cytochrome c oxidase (complex IV, CIV), a multisubunit enzyme composed of 14 subunits. The complex is composed of a catalytic core of 3 subunits MT-CO1, MT-CO2 and MT-CO3, encoded in the mitochondrial DNA, and 11 supernumerary subunits COX4I, COX5A, COX5B, COX6A, COX6B, COX6C, COX7A, COX7B, COX7C, COX8 and NDUFA4, which are encoded in the nuclear genome. The complex exists as a monomer or a dimer and forms supercomplexes (SCs) in the inner mitochondrial membrane with NADH-ubiquinone oxidoreductase (complex I, CI) and ubiquinol-cytochrome c oxidoreductase (cytochrome b-c1 complex, complex III, CIII), resulting in different assemblies (supercomplex SCI(1)III(2)IV(1) and megacomplex MCI(2)III(2)IV(2)). Testis specific.

It localises to the mitochondrion inner membrane. It participates in energy metabolism; oxidative phosphorylation. Functionally, component of the cytochrome c oxidase, the last enzyme in the mitochondrial electron transport chain which drives oxidative phosphorylation. The respiratory chain contains 3 multisubunit complexes succinate dehydrogenase (complex II, CII), ubiquinol-cytochrome c oxidoreductase (cytochrome b-c1 complex, complex III, CIII) and cytochrome c oxidase (complex IV, CIV), that cooperate to transfer electrons derived from NADH and succinate to molecular oxygen, creating an electrochemical gradient over the inner membrane that drives transmembrane transport and the ATP synthase. Cytochrome c oxidase is the component of the respiratory chain that catalyzes the reduction of oxygen to water. Electrons originating from reduced cytochrome c in the intermembrane space (IMS) are transferred via the dinuclear copper A center (CU(A)) of subunit 2 and heme A of subunit 1 to the active site in subunit 1, a binuclear center (BNC) formed by heme A3 and copper B (CU(B)). The BNC reduces molecular oxygen to 2 water molecules using 4 electrons from cytochrome c in the IMS and 4 protons from the mitochondrial matrix. The polypeptide is Cytochrome c oxidase subunit 6B2 (Cox6b2) (Rattus norvegicus (Rat)).